Reading from the N-terminus, the 372-residue chain is 7-methylxanthosine synthase 1 (372 aa).

An S-adenosyl-L-homocysteine-binding site is contributed by Tyr18. 2 residues coordinate xanthosine: Asn21 and Asn25. S-adenosyl-L-homocysteine-binding residues include Cys62, Asn67, Asp101, Leu102, Ser140, Phe141, and Cys157. Position 158 (Tyr158) interacts with xanthosine. Residue Cys159 participates in S-adenosyl-L-homocysteine binding. Positions 161 and 162 each coordinate xanthosine. Asn179, Asp261, Phe263, and Asn264 together coordinate Mg(2+). Positions 316, 321, and 356 each coordinate xanthosine.

It belongs to the methyltransferase superfamily. Type-7 methyltransferase family. Requires Mg(2+) as cofactor. Expressed in stems, young leaves, floral buds, developing endosperm and immature fruits (grains). Detected in roots and old leaves, but not in mature fruits.

The enzyme catalyses xanthosine + S-adenosyl-L-methionine = 7-methylxanthosine + S-adenosyl-L-homocysteine. The protein operates within alkaloid biosynthesis. Involved in the biosynthesis of caffeine. Specific for xanthosine and could not use xanthosine 5'-monophosphate (XMP) as substrate. Catalyzes the 7-N-methylation activity of xanthosine, but does not have 1-N- or 3-N-methylation activity. The chain is 7-methylxanthosine synthase 1 from Coffea arabica (Arabian coffee).